An 817-amino-acid polypeptide reads, in one-letter code: MAVSLDDDVPLILTLDEAESAPLPPSNSLGQEQLPSKNGGSHSIHNSQVPSLVSGADSPPSSPTGHNWEMNYQEAAIYLQEGQNNDKFFTHPKDARALAAYLFVHNHFFYMMELLTALLLLLLSLCESPAVPVLKLHTYVHATLELFALMVVVFELCMKLRWLGFHTFVRHKRTMVKTSVLVVQFIEAIVVLVRQTSHVRVTRALRCIFLVDCRYCGGVRRNLRQIFQSLPPFMDILLLLLFFMIIFAILGFYLFSTNPSDPYFSTLENSIVNLFVLLTTANFPDVMMPSYSRNPWSCVFFIVYLSIELYFIMNLLLAVVFDTFNDIEKHKFKSLLLHKRTAIQHAYGLLASQRRPAGISYRQFEGLMRFYKPRMSARERFLTFKALNQSNTPLLSLKDFYDIYEVAALQWKAKRNRQHWFDELPRTAFLIFKGINILVNSKAFQYFMYLVVAVNGVWILVETFMLKGGNFTSKHVPWSYLVFLTIYGVELFMKVAGLGPVEYLSSGWNLFDFSVTAFAFLGLLALTLNMEPFYFIVVLRPLQLLRLFKLKKRYRNVLDTMFELLPRMASLGLTLLTFYYSFAIVGMEFFNGRLTPNCCNTSTVADAYRFINHTVGNKTKVEEGYYYLNNFDNILNSFVTLFELTVVNNWYIIMEGVTSQTSHWSRLYFMTFYIVTMVVMTIIVAFILEAFVFRMNYSRKSQDSEVDSGIVIEKEMSKEELMAVLELYREERGTSSDVTRLLDTLSQMEKYQQNSMVFLGRRSRTKSDLSLKMYQEEIQEWYEEHAREQEQQKLRGSVPGPAAQQPPGSRQRSQTVT.

At 1-113 (MAVSLDDDVP…VHNHFFYMME (113 aa)) the chain is on the cytoplasmic side. Residues 20–65 (SAPLPPSNSLGQEQLPSKNGGSHSIHNSQVPSLVSGADSPPSSPTG) form a disordered region. Over residues 26–51 (SNSLGQEQLPSKNGGSHSIHNSQVPS) the composition is skewed to polar residues. The helical transmembrane segment at 114-134 (LLTALLLLLLSLCESPAVPVL) threads the bilayer. At 135 to 137 (KLH) the chain is on the extracellular side. A helical transmembrane segment spans residues 138–158 (TYVHATLELFALMVVVFELCM). The Cytoplasmic portion of the chain corresponds to 159–172 (KLRWLGFHTFVRHK). Residues 173-193 (RTMVKTSVLVVQFIEAIVVLV) traverse the membrane as a helical segment. Residues 194–202 (RQTSHVRVT) are Extracellular-facing. The chain crosses the membrane as a helical span at residues 203–221 (RALRCIFLVDCRYCGGVRR). The Cytoplasmic segment spans residues 222–235 (NLRQIFQSLPPFMD). The helical transmembrane segment at 236-256 (ILLLLLFFMIIFAILGFYLFS) threads the bilayer. The Extracellular segment spans residues 257 to 263 (TNPSDPY). Residues 264–287 (FSTLENSIVNLFVLLTTANFPDVM) constitute an intramembrane region (helical; Pore-forming). Topologically, residues 288–298 (MPSYSRNPWSC) are extracellular. A helical transmembrane segment spans residues 299–319 (VFFIVYLSIELYFIMNLLLAV). At 320-445 (VFDTFNDIEK…NILVNSKAFQ (126 aa)) the chain is on the cytoplasmic side. The helical transmembrane segment at 446 to 466 (YFMYLVVAVNGVWILVETFML) threads the bilayer. Topologically, residues 467-480 (KGGNFTSKHVPWSY) are extracellular. A glycan (N-linked (GlcNAc...) asparagine) is linked at N470. The chain crosses the membrane as a helical span at residues 481-501 (LVFLTIYGVELFMKVAGLGPV). Over 502 to 504 (EYL) the chain is Cytoplasmic. Residues 505-527 (SSGWNLFDFSVTAFAFLGLLALT) form a helical membrane-spanning segment. Topologically, residues 528–535 (LNMEPFYF) are extracellular. Residues 536-550 (IVVLRPLQLLRLFKL) form a helical membrane-spanning segment. Topologically, residues 551-569 (KKRYRNVLDTMFELLPRMA) are cytoplasmic. A helical membrane pass occupies residues 570 to 590 (SLGLTLLTFYYSFAIVGMEFF). The Extracellular portion of the chain corresponds to 591–630 (NGRLTPNCCNTSTVADAYRFINHTVGNKTKVEEGYYYLNN). The helical; Pore-forming intramembrane region spans 631–654 (FDNILNSFVTLFELTVVNNWYIIM). The Extracellular segment spans residues 655–671 (EGVTSQTSHWSRLYFMT). The chain crosses the membrane as a helical span at residues 672 to 692 (FYIVTMVVMTIIVAFILEAFV). The Cytoplasmic portion of the chain corresponds to 693–817 (FRMNYSRKSQ…GSRQRSQTVT (125 aa)). Residues 770–794 (SLKMYQEEIQEWYEEHAREQEQQKL) adopt a coiled-coil conformation. The segment at 785–817 (HAREQEQQKLRGSVPGPAAQQPPGSRQRSQTVT) is disordered. The span at 806–817 (PPGSRQRSQTVT) shows a compositional bias: polar residues.

Belongs to the calcium channel alpha-1 subunit (TC 1.A.1.11) family. Two pore calcium channel subfamily. As to quaternary structure, dimer. Interacts with MTOR; the interaction is required for TPCN1 ATP sensitivity. Interacts with STX7, STX8 and STX12. Interacts with JPT2. Found in a complex with LSM12, TPCN1 and TPCN2. N-glycosylated. As to expression, mainly expressed in epithelial tissues like lung, kidney, colon, spleen and liver (at protein level).

Its subcellular location is the lysosome membrane. It localises to the endosome membrane. The protein localises to the early endosome membrane. The protein resides in the recycling endosome membrane. It catalyses the reaction Na(+)(in) = Na(+)(out). The enzyme catalyses Ca(2+)(in) = Ca(2+)(out). With respect to regulation, na(+) current is inhibited by ATP in a MTORC-dependent manner. ATP sensitivity is independent of PI(3,5)P2. Probably regulated by Mg(2+) ions, cytosolic Mg(2+) selectively inhibits outward current while lysosomal Mg(2+) modestly inhibits both the outward and inward currents. In the absence of Mg(2+), NAADP readily activates TPCN2, with properties similar to PI(3,5)P2. Both current elicited by PI(3,5)P2 as well as NAADP are inhibited by tetrandrine. Intracellular channel initially characterized as a non-selective Ca(2+)-permeable channel activated by NAADP (nicotinic acid adenine dinucleotide phosphate), it is also a voltage-gated highly-selective Na(+) channel activated directly by PI(3,5)P2 (phosphatidylinositol 3,5-bisphosphate) that senses pH changes and confers electrical excitability to organelles. Localizes to the early and recycling endosomes membranes where it plays a role in the uptake and processing of proteins and regulates organellar membrane excitability, membrane trafficking and pH homeostasis. Ion selectivity is not fixed but rather agonist-dependent and under defined ionic conditions, can be readily activated by both NAADP and PI(3,5)P2. Required for mTOR-dependent nutrient sensing. The protein is Two pore calcium channel protein 1 of Mus musculus (Mouse).